A 239-amino-acid polypeptide reads, in one-letter code: Large ribosomal subunit protein uL2 (239 aa).

Disordered stretches follow at residues Met1–Pro20 and Pro203–Lys239. Basic residues predominate over residues Pro222–Lys239.

Belongs to the universal ribosomal protein uL2 family. In terms of assembly, part of the 50S ribosomal subunit. Forms a bridge to the 30S subunit in the 70S ribosome.

In terms of biological role, one of the primary rRNA binding proteins. Required for association of the 30S and 50S subunits to form the 70S ribosome, for tRNA binding and peptide bond formation. It has been suggested to have peptidyltransferase activity; this is somewhat controversial. Makes several contacts with the 16S rRNA in the 70S ribosome. The chain is Large ribosomal subunit protein uL2 from Pyrococcus horikoshii (strain ATCC 700860 / DSM 12428 / JCM 9974 / NBRC 100139 / OT-3).